The chain runs to 1388 residues: DNA-directed RNA polymerase subunit beta'' (1388 aa).

Positions 224, 294, 301, and 304 each coordinate Zn(2+).

Belongs to the RNA polymerase beta' chain family. RpoC2 subfamily. As to quaternary structure, in plastids the minimal PEP RNA polymerase catalytic core is composed of four subunits: alpha, beta, beta', and beta''. When a (nuclear-encoded) sigma factor is associated with the core the holoenzyme is formed, which can initiate transcription. It depends on Zn(2+) as a cofactor.

The protein resides in the plastid. It localises to the chloroplast. The enzyme catalyses RNA(n) + a ribonucleoside 5'-triphosphate = RNA(n+1) + diphosphate. Functionally, DNA-dependent RNA polymerase catalyzes the transcription of DNA into RNA using the four ribonucleoside triphosphates as substrates. This chain is DNA-directed RNA polymerase subunit beta'', found in Phalaenopsis aphrodite subsp. formosana (Moth orchid).